We begin with the raw amino-acid sequence, 478 residues long: Proline--tRNA ligase (478 aa).

This sequence belongs to the class-II aminoacyl-tRNA synthetase family. ProS type 3 subfamily. In terms of assembly, homodimer.

It is found in the cytoplasm. It catalyses the reaction tRNA(Pro) + L-proline + ATP = L-prolyl-tRNA(Pro) + AMP + diphosphate. Catalyzes the attachment of proline to tRNA(Pro) in a two-step reaction: proline is first activated by ATP to form Pro-AMP and then transferred to the acceptor end of tRNA(Pro). In Ignicoccus hospitalis (strain KIN4/I / DSM 18386 / JCM 14125), this protein is Proline--tRNA ligase.